The primary structure comprises 181 residues: ATP synthase subunit delta (181 aa).

The protein belongs to the ATPase delta chain family. F-type ATPases have 2 components, F(1) - the catalytic core - and F(0) - the membrane proton channel. F(1) has five subunits: alpha(3), beta(3), gamma(1), delta(1), epsilon(1). F(0) has three main subunits: a(1), b(2) and c(10-14). The alpha and beta chains form an alternating ring which encloses part of the gamma chain. F(1) is attached to F(0) by a central stalk formed by the gamma and epsilon chains, while a peripheral stalk is formed by the delta and b chains.

It localises to the cell inner membrane. F(1)F(0) ATP synthase produces ATP from ADP in the presence of a proton or sodium gradient. F-type ATPases consist of two structural domains, F(1) containing the extramembraneous catalytic core and F(0) containing the membrane proton channel, linked together by a central stalk and a peripheral stalk. During catalysis, ATP synthesis in the catalytic domain of F(1) is coupled via a rotary mechanism of the central stalk subunits to proton translocation. Its function is as follows. This protein is part of the stalk that links CF(0) to CF(1). It either transmits conformational changes from CF(0) to CF(1) or is implicated in proton conduction. In Mannheimia succiniciproducens (strain KCTC 0769BP / MBEL55E), this protein is ATP synthase subunit delta.